The sequence spans 92 residues: Elongation factor 1-beta (92 aa).

Belongs to the EF-1-beta/EF-1-delta family.

Functionally, promotes the exchange of GDP for GTP in EF-1-alpha/GDP, thus allowing the regeneration of EF-1-alpha/GTP that could then be used to form the ternary complex EF-1-alpha/GTP/AAtRNA. The chain is Elongation factor 1-beta from Korarchaeum cryptofilum (strain OPF8).